Reading from the N-terminus, the 324-residue chain is tRNA-modifying protein YgfZ (324 aa).

Residue tryptophan 184 coordinates folate.

Belongs to the tRNA-modifying YgfZ family.

It localises to the cytoplasm. In terms of biological role, folate-binding protein involved in regulating the level of ATP-DnaA and in the modification of some tRNAs. It is probably a key factor in regulatory networks that act via tRNA modification, such as initiation of chromosomal replication. In Vibrio vulnificus (strain YJ016), this protein is tRNA-modifying protein YgfZ.